A 198-amino-acid polypeptide reads, in one-letter code: Probable nicotinate-nucleotide adenylyltransferase (198 aa).

Belongs to the NadD family.

It carries out the reaction nicotinate beta-D-ribonucleotide + ATP + H(+) = deamido-NAD(+) + diphosphate. It functions in the pathway cofactor biosynthesis; NAD(+) biosynthesis; deamido-NAD(+) from nicotinate D-ribonucleotide: step 1/1. Catalyzes the reversible adenylation of nicotinate mononucleotide (NaMN) to nicotinic acid adenine dinucleotide (NaAD). The chain is Probable nicotinate-nucleotide adenylyltransferase from Chlorobium limicola (strain DSM 245 / NBRC 103803 / 6330).